Reading from the N-terminus, the 299-residue chain is Non-homologous end joining protein Ku (299 aa).

Positions 10–188 (ISFGLVHIPV…TEAVTDARLT (179 aa)) constitute a Ku domain. 2 disordered regions span residues 227-249 (AGEGKIEDVETDPGEEERKSADV) and 261-299 (AGKSSASKTRKPAAKDKVADKQSPKPKRPAVRKKTGKAS). The span at 273–283 (AAKDKVADKQS) shows a compositional bias: basic and acidic residues. Residues 284–299 (PKPKRPAVRKKTGKAS) show a composition bias toward basic residues.

This sequence belongs to the prokaryotic Ku family. Homodimer. Interacts with LigD.

With LigD forms a non-homologous end joining (NHEJ) DNA repair enzyme, which repairs dsDNA breaks with reduced fidelity. Binds linear dsDNA with 5'- and 3'- overhangs but not closed circular dsDNA nor ssDNA. Recruits and stimulates the ligase activity of LigD. In Pseudomonas syringae pv. tomato (strain ATCC BAA-871 / DC3000), this protein is Non-homologous end joining protein Ku.